The primary structure comprises 293 residues: Outer membrane protein assembly factor BamD (293 aa).

Positions 1-26 (MIQRPTFFSPIHLLAVLLATFILITG) are cleaved as a signal peptide. A lipid anchor (N-palmitoyl cysteine) is attached at C27. C27 carries the S-diacylglycerol cysteine lipid modification.

Belongs to the BamD family. Part of the Bam complex.

It localises to the cell outer membrane. Its function is as follows. Part of the outer membrane protein assembly complex, which is involved in assembly and insertion of beta-barrel proteins into the outer membrane. This is Outer membrane protein assembly factor BamD from Xylella fastidiosa (strain Temecula1 / ATCC 700964).